The sequence spans 332 residues: T-cell surface glycoprotein CD1c2 (332 aa).

Positions 1–17 are cleaved as a signal peptide; the sequence is MLFLQFLFVDVVLGGSI. Residues 18–300 are Extracellular-facing; that stretch reads TENVVQENIS…IILYWGHGLS (283 aa). N-linked (GlcNAc...) asparagine glycosylation is found at asparagine 25, asparagine 38, and asparagine 75. 2 disulfide bridges follow: cysteine 120-cysteine 184 and cysteine 224-cysteine 279. Residues 205–292 enclose the Ig-like domain; it reads PEVWLSSSPN…HSSLRDQDII (88 aa). The helical transmembrane segment at 301-321 threads the bilayer; that stretch reads VILIALAVIVPLVLLIVLVLL. Residues 322 to 332 are Cytoplasmic-facing; it reads CKKRCTYQGIP.

In terms of assembly, heterodimer with B2M (beta-2-microglobulin).

It is found in the cell membrane. The protein resides in the endosome membrane. Functionally, antigen-presenting protein that binds self and non-self lipid and glycolipid antigens and presents them to T-cell receptors on natural killer T-cells. This chain is T-cell surface glycoprotein CD1c2 (CD1C2), found in Cavia porcellus (Guinea pig).